Reading from the N-terminus, the 220-residue chain is Splicing factor U2AF 26 kDa subunit (220 aa).

N-acetylalanine is present on Ala-2. The C3H1-type 1 zinc-finger motif lies at Glu-12–Pro-40. The 83-residue stretch at Ser-65–Val-147 folds into the RRM domain. The C3H1-type 2 zinc finger occupies Asp-149–Pro-176. Positions Leu-185–Phe-220 are disordered. Positions Gly-189 to Asn-208 are enriched in basic residues. The span at His-209 to Phe-220 shows a compositional bias: basic and acidic residues.

It belongs to the splicing factor SR family. In terms of assembly, interacts with GFI1, U2AF2 and C1QBP. As to expression, isoform 2 is widely expressed. Isoform 3 is highly expressed in heart, brain and lung, lower expressed in thymus and much lower expressed in peripheral blood leukocytes.

It is found in the nucleus. Its subcellular location is the nucleus speckle. The protein localises to the cytoplasm. In terms of biological role, RNA-binding protein that function as a pre-mRNA splicing factor. Plays a critical role in both constitutive and enhancer-dependent splicing by mediating protein-protein interactions and protein-RNA interactions required for accurate 3'-splice site selection. Acts by enhancing the binding of U2AF2 to weak pyrimidine tracts. Also participates in the regulation of alternative pre-mRNA splicing. Activates exon 5 skipping of PTPRC during T-cell activation; an event reversed by GFI1. Binds to RNA at the AG dinucleotide at the 3'-splice site. Shows a preference for AGC or AGA. The sequence is that of Splicing factor U2AF 26 kDa subunit (U2AF1L4) from Homo sapiens (Human).